The sequence spans 236 residues: Diaminopimelate epimerase (236 aa).

The substrate site is built by N8 and N55. Residue C64 is the Proton donor of the active site. Residues 65–66, N159, and 176–177 contribute to the substrate site; these read GN and ER. C186 functions as the Proton acceptor in the catalytic mechanism. 187–188 is a binding site for substrate; it reads GT.

The protein belongs to the diaminopimelate epimerase family. As to quaternary structure, probably forms homotrimers.

It is found in the cytoplasm. The enzyme catalyses (2S,6S)-2,6-diaminopimelate = meso-2,6-diaminopimelate. It functions in the pathway amino-acid biosynthesis; L-lysine biosynthesis via DAP pathway; DL-2,6-diaminopimelate from LL-2,6-diaminopimelate: step 1/1. Functionally, catalyzes the stereoinversion of LL-2,6-diaminopimelate (L,L-DAP) to meso-diaminopimelate (meso-DAP), a precursor of L-lysine and an essential component of the bacterial peptidoglycan. Also catalyzes the racemization of certain amino acids, including Lys, with low efficiency. This Thermotoga maritima (strain ATCC 43589 / DSM 3109 / JCM 10099 / NBRC 100826 / MSB8) protein is Diaminopimelate epimerase.